Here is a 415-residue protein sequence, read N- to C-terminus: Putative competence-damage inducible protein (415 aa).

The protein belongs to the CinA family.

The polypeptide is Putative competence-damage inducible protein (Listeria welshimeri serovar 6b (strain ATCC 35897 / DSM 20650 / CCUG 15529 / CIP 8149 / NCTC 11857 / SLCC 5334 / V8)).